A 495-amino-acid polypeptide reads, in one-letter code: Nuclear receptor subfamily 6 group A member 1 (495 aa).

The tract at residues Met-1–Gly-34 is disordered. The segment covering Ser-9 to Ala-18 has biased composition (gly residues). Positions Gln-72 to Glu-147 form a DNA-binding region, nuclear receptor. Positions 75, 78, 92, 95, 111, 117, 127, and 130 each coordinate Zn(2+). NR C4-type zinc fingers lie at residues Cys-75 to Cys-95 and Cys-111 to Cys-135. 2 disordered regions span residues Ile-145–Glu-165 and Phe-177–Ser-214. A compositionally biased stretch (basic and acidic residues) spans Glu-180–His-192. Residues His-187–Leu-268 are sufficient for interaction with UIMC1. Residues Ser-202–Ser-214 show a composition bias toward low complexity. One can recognise an NR LBD domain in the interval Gln-264–Glu-495.

The protein belongs to the nuclear hormone receptor family. NR6 subfamily. In terms of assembly, homodimer. Interacts with UIMC1. In terms of tissue distribution, expressed in the germ cells of both the adult testis and ovary, being most abundant in spermatids.

It is found in the nucleus. Orphan nuclear receptor that binds to a response element containing the sequence 5'-TCAAGGTCA-3'. Acts as a regulator of embryonic stem cell pluripotency by mediating repression of POU5F1/OCT4: binds to the DR0 element within the POU5F1/OCT4 promoter and inhibits POU5F1/OCT4 expression during embryonic stem cell differentiation. Required to restrict POU5F1/OCT4 expression to the germ cell lineage. Involved in the regulation of gene expression in germ cell development during gametogenesis. This Mus musculus (Mouse) protein is Nuclear receptor subfamily 6 group A member 1 (Nr6a1).